Here is a 117-residue protein sequence, read N- to C-terminus: Large ribosomal subunit protein bL20 (117 aa).

It belongs to the bacterial ribosomal protein bL20 family.

Functionally, binds directly to 23S ribosomal RNA and is necessary for the in vitro assembly process of the 50S ribosomal subunit. It is not involved in the protein synthesizing functions of that subunit. In Crocosphaera subtropica (strain ATCC 51142 / BH68) (Cyanothece sp. (strain ATCC 51142)), this protein is Large ribosomal subunit protein bL20.